Here is a 426-residue protein sequence, read N- to C-terminus: Serine--tRNA ligase (426 aa).

The disordered stretch occupies residues 103–129; it reads VPNLPDDSVPTGKDENDNPEIRRWGTP. The span at 114 to 125 shows a compositional bias: basic and acidic residues; it reads GKDENDNPEIRR. Residue 230–232 participates in L-serine binding; that stretch reads TAE. An ATP-binding site is contributed by 261–263; sequence RSE. An L-serine-binding site is contributed by E284. 348–351 contributes to the ATP binding site; it reads EISS. S384 contributes to the L-serine binding site.

The protein belongs to the class-II aminoacyl-tRNA synthetase family. Type-1 seryl-tRNA synthetase subfamily. In terms of assembly, homodimer. The tRNA molecule binds across the dimer.

The protein resides in the cytoplasm. The catalysed reaction is tRNA(Ser) + L-serine + ATP = L-seryl-tRNA(Ser) + AMP + diphosphate + H(+). It carries out the reaction tRNA(Sec) + L-serine + ATP = L-seryl-tRNA(Sec) + AMP + diphosphate + H(+). The protein operates within aminoacyl-tRNA biosynthesis; selenocysteinyl-tRNA(Sec) biosynthesis; L-seryl-tRNA(Sec) from L-serine and tRNA(Sec): step 1/1. Its function is as follows. Catalyzes the attachment of serine to tRNA(Ser). Is also able to aminoacylate tRNA(Sec) with serine, to form the misacylated tRNA L-seryl-tRNA(Sec), which will be further converted into selenocysteinyl-tRNA(Sec). The chain is Serine--tRNA ligase from Dichelobacter nodosus (strain VCS1703A).